The chain runs to 615 residues: Zinc finger protein 653 (615 aa).

Disordered regions lie at residues 1–46 (MAER…ARRR), 93–115 (RSGR…KRRR), and 174–235 (PLSD…SGLI). Over residues 7-25 (EPGAEAEAGAGGEAAAEEG) the composition is skewed to low complexity. Residues 106-115 (KKPKRKKRRR) show a composition bias toward basic residues. Low complexity-rich tracts occupy residues 192–203 (GSSDSSSSGSSS) and 212–232 (QPAK…TGSS). 5 consecutive C2H2-type zinc fingers follow at residues 467-492 (FHCP…NLVH), 498-522 (KVCP…MIIH), 528-550 (FTCE…RRTH), 556-578 (LQCE…MKKH), and 586-609 (FTCD…LKSH).

This sequence belongs to the krueppel C2H2-type zinc-finger protein family. In terms of assembly, interacts with NR5A1. Highly expressed in testis and spleen. Moderately expressed in lung, adrenal gland, uterus, and ovary. Very low expression in pancreas, heart, skeletal muscle, adipose tissue, kidney, and liver.

The protein resides in the nucleus. In terms of biological role, transcriptional repressor. May repress NR5A1, PPARG, NR1H3, NR4A2, ESR1 and NR3C1 transcriptional activity. This chain is Zinc finger protein 653 (Znf653), found in Mus musculus (Mouse).